A 393-amino-acid chain; its full sequence is Dual-specificity RNA methyltransferase RlmN (393 aa).

The disordered stretch occupies residues M1–A22. Over residues S10 to A22 the composition is skewed to low complexity. E114 acts as the Proton acceptor in catalysis. One can recognise a Radical SAM core domain in the interval E120–D358. A disulfide bridge connects residues C127 and C364. [4Fe-4S] cluster-binding residues include C134, C138, and C141. S-adenosyl-L-methionine contacts are provided by residues G188–E189, S220, S242–H244, and N321. The S-methylcysteine intermediate role is filled by C364.

Belongs to the radical SAM superfamily. RlmN family. [4Fe-4S] cluster serves as cofactor.

The protein resides in the cytoplasm. It carries out the reaction adenosine(2503) in 23S rRNA + 2 reduced [2Fe-2S]-[ferredoxin] + 2 S-adenosyl-L-methionine = 2-methyladenosine(2503) in 23S rRNA + 5'-deoxyadenosine + L-methionine + 2 oxidized [2Fe-2S]-[ferredoxin] + S-adenosyl-L-homocysteine. The catalysed reaction is adenosine(37) in tRNA + 2 reduced [2Fe-2S]-[ferredoxin] + 2 S-adenosyl-L-methionine = 2-methyladenosine(37) in tRNA + 5'-deoxyadenosine + L-methionine + 2 oxidized [2Fe-2S]-[ferredoxin] + S-adenosyl-L-homocysteine. In terms of biological role, specifically methylates position 2 of adenine 2503 in 23S rRNA and position 2 of adenine 37 in tRNAs. m2A2503 modification seems to play a crucial role in the proofreading step occurring at the peptidyl transferase center and thus would serve to optimize ribosomal fidelity. In Sodalis glossinidius (strain morsitans), this protein is Dual-specificity RNA methyltransferase RlmN.